Consider the following 276-residue polypeptide: Vitamin B12-binding protein (276 aa).

Residues 1–20 form the signal peptide; that stretch reads MIVRFLCWLTGLLLCTAAYA. Positions 24–273 constitute a Fe/B12 periplasmic-binding domain; the sequence is RVISLAPHAT…QLTALSPGSS (250 aa). Cysteine 186 and cysteine 262 form a disulfide bridge.

The protein belongs to the BtuF family. The complex is composed of two ATP-binding proteins (BtuD), two transmembrane proteins (BtuC) and a solute-binding protein (BtuF).

Its subcellular location is the periplasm. Functionally, part of the ABC transporter complex BtuCDF involved in vitamin B12 import. Binds vitamin B12 and delivers it to the periplasmic surface of BtuC. The chain is Vitamin B12-binding protein from Pectobacterium carotovorum subsp. carotovorum (strain PC1).